The chain runs to 288 residues: Shikimate dehydrogenase (NADP(+)) (288 aa).

Shikimate-binding positions include Ser21 to Ser23 and Thr68. Residue Lys72 is the Proton acceptor of the active site. Shikimate-binding residues include Asn93 and Asp108. Residues Gly132–Ala136 and Leu230 contribute to the NADP(+) site. Position 232 (Tyr232) interacts with shikimate. NADP(+) is bound at residue Gly253.

The protein belongs to the shikimate dehydrogenase family. Homodimer.

It catalyses the reaction shikimate + NADP(+) = 3-dehydroshikimate + NADPH + H(+). Its pathway is metabolic intermediate biosynthesis; chorismate biosynthesis; chorismate from D-erythrose 4-phosphate and phosphoenolpyruvate: step 4/7. Functionally, involved in the biosynthesis of the chorismate, which leads to the biosynthesis of aromatic amino acids. Catalyzes the reversible NADPH linked reduction of 3-dehydroshikimate (DHSA) to yield shikimate (SA). The chain is Shikimate dehydrogenase (NADP(+)) from Crocosphaera subtropica (strain ATCC 51142 / BH68) (Cyanothece sp. (strain ATCC 51142)).